We begin with the raw amino-acid sequence, 52 residues long: GKSEEELAEFFRIFDKNADGYIDAEELAEIIRSSGEHVTDEEIEELMKDGDK.

2 EF-hand domains span residues 2-37 (KSEE…SGEH) and 38-52 (VTDE…DGDK). 5 residues coordinate Ca(2+): D15, N17, D19, Y21, and E26.

Belongs to the troponin C family.

In terms of biological role, troponin is the central regulatory protein of striated muscle contraction. Tn consists of three components: Tn-I which is the inhibitor of actomyosin ATPase, Tn-T which contains the binding site for tropomyosin and Tn-C. The binding of calcium to Tn-C abolishes the inhibitory action of Tn on actin filaments. The polypeptide is Troponin C, skeletal muscle (Protopterus dolloi (Slender lungfish)).